The chain runs to 91 residues: RNA-binding protein Hfq (91 aa).

In terms of domain architecture, Sm spans 9–68; sequence DPFLNALRRERVPVSVYLVNGIKLQGTIESFDQFVVLLRNTVSQMVYKHAISTVVPARNV.

This sequence belongs to the Hfq family. In terms of assembly, homohexamer.

In terms of biological role, RNA chaperone that binds small regulatory RNA (sRNAs) and mRNAs to facilitate mRNA translational regulation in response to envelope stress, environmental stress and changes in metabolite concentrations. Also binds with high specificity to tRNAs. The sequence is that of RNA-binding protein Hfq from Stenotrophomonas maltophilia (strain K279a).